The primary structure comprises 432 residues: Glutamate-1-semialdehyde 2,1-aminomutase (432 aa).

An N6-(pyridoxal phosphate)lysine modification is found at lysine 267.

The protein belongs to the class-III pyridoxal-phosphate-dependent aminotransferase family. HemL subfamily. As to quaternary structure, homodimer. Requires pyridoxal 5'-phosphate as cofactor.

The protein localises to the cytoplasm. It carries out the reaction (S)-4-amino-5-oxopentanoate = 5-aminolevulinate. Its pathway is porphyrin-containing compound metabolism; protoporphyrin-IX biosynthesis; 5-aminolevulinate from L-glutamyl-tRNA(Glu): step 2/2. This chain is Glutamate-1-semialdehyde 2,1-aminomutase, found in Syntrophus aciditrophicus (strain SB).